The primary structure comprises 289 residues: Fumagillin beta-trans-bergamotene synthase af520 (289 aa).

6 helical membrane passes run 35 to 55 (AVAL…GFLW), 95 to 115 (TLLY…TNTI), 142 to 162 (LIGA…FDGG), 165 to 185 (LHGL…TTGH), 222 to 242 (AWTI…LAYV), and 262 to 282 (YVSY…PIFP).

Belongs to the paxB family.

It is found in the membrane. It catalyses the reaction (2E,6E)-farnesyl diphosphate = (+)-exo-beta-bergamotene + diphosphate. It participates in secondary metabolite biosynthesis; terpenoid biosynthesis. In terms of biological role, beta-trans-bergamotene synthase; part of the gene cluster that mediates the biosynthesis of fumagillin, a meroterpenoid that has numerous biological activities including irreversible inhibition of human type 2 methionine aminopeptidase (METAP2). Within the pathway, the membrane-bound fumagillin beta-trans-bergamotene synthase af520 converts farnesyl pyrophosphate (FPP) to beta-trans-bergamotene. The pathway begins with the conversion of FPP to beta-trans-bergamotene by af520. The multifunctional cytochrome P450 monooxygenase af510 then converts beta-trans-bergamotene into 5-keto-demethoxyfumagillol via several oxydation steps. 5-keto-demethoxyfumagillol is then subjected to successive C-6 hydroxylation and O-methylation by the dioxygenase af480 and O-methyltransferase af390-400, respectively, to yield 5-keto-fumagillol, which is then stereoselectively reduced by the keto-reductase af490 to 5R-hydroxy-seco-sesquiterpene. The next step is the polyketide transferase af380-catalyzed transfer of a dodecapentaenoyl group synthesized by the polyketide synthase af370 onto 5R-hydroxy-seco-sesquiterpene which leads to the production of prefumagillin. Finally, oxidative cleavage by the monooxygenase af470 converts prefumagillin to fumagillin. In Aspergillus fumigatus (strain ATCC MYA-4609 / CBS 101355 / FGSC A1100 / Af293) (Neosartorya fumigata), this protein is Fumagillin beta-trans-bergamotene synthase af520.